The following is a 258-amino-acid chain: Heat-labile enterotoxin A chain (258 aa).

Positions 1 to 18 (MKNITFIFFILLASPLYA) are cleaved as a signal peptide. Residue 25–39 (RADSRPPDEIKRSGG) coordinates NAD(+). E130 is a catalytic residue. A disulfide bridge connects residues C205 and C217.

This sequence belongs to the enterotoxin A family. In terms of assembly, heterohexamer of one A chain and of five B chains.

The biological activity of the toxin is produced by the A chain, which activates intracellular adenyl cyclase. In Escherichia coli, this protein is Heat-labile enterotoxin A chain (eltA).